A 385-amino-acid chain; its full sequence is WD repeat-containing protein RUP1 (385 aa).

WD repeat units lie at residues 69–108, 119–160, 163–205, 210–250, 254–292, 298–337, and 348–385; these read TGSDAIGAIEFDPTGEIIATGGIARKIRSYRLSSLLESRD, CTPA…PVSE, EHGG…TLEE, GGGA…DPLI, GHTKTVTYARFMDSHTIVTGSTDGSLKQWDIDNGRRVVR, VNSRNFVGLSVWRHGGLVVSGSENNQVFVYDKRWEEPVWV, and SDRRFVSSVCLRQVDEDWCTLVAGGSDGALEIFSGKQS.

As to quaternary structure, interacts with UVR8. Interacts directly with DHU1.

Its subcellular location is the nucleus. The protein localises to the cytoplasm. It localises to the cytosol. In terms of biological role, functions in association with RUP2 as repressor of UV-B-induced photomorphogenesis mediated by UVR8 and HY5, likely in coordination with DHU1. Plays a crucial negative feedback regulatory role downstream of UVR8-COP1 to inhibit UVR8 function, balance UV-B-specific responses and ensure normal plant growth. Is involved in the regulation of photoperiodic flowering and vegetative development. This is WD repeat-containing protein RUP1 from Arabidopsis thaliana (Mouse-ear cress).